The primary structure comprises 632 residues: Tail spike protein (632 aa).

The 126-residue stretch at serine 505–leucine 630 folds into the Peptidase S74 domain.

In terms of assembly, homotrimer. In terms of processing, proteolytic cleavage and release of the chaperone in the host cytosol stabilizes the folded protein. The cleavage gives rise to the mature tail spike protein but is not essential for catalytic activity.

It is found in the virion. Functionally, functions as a receptor binding protein (RBP) and probably mediates the attachment to the host capsular exopolysaccharides. Displays a depolymerase activity that specifically degrades the K5-type polysaccharides of Escherichia coli capsule. Its function is as follows. The C-terminal chaperone protein mediates homotrimerization and proper folding of the catalytic trimer. The protein is Tail spike protein (kflA) of Escherichia virus K5 (Bacteriophage K5).